Consider the following 55-residue polypeptide: ATP synthase F(0) complex subunit 8 (55 aa).

A helical membrane pass occupies residues 7–29 (NPWFYIMLMSWLTFSLIIQPELL).

This sequence belongs to the ATPase protein 8 family. In terms of assembly, component of the ATP synthase complex composed at least of ATP5F1A/subunit alpha, ATP5F1B/subunit beta, ATP5MC1/subunit c (homooctomer), MT-ATP6/subunit a, MT-ATP8/subunit 8, ATP5ME/subunit e, ATP5MF/subunit f, ATP5MG/subunit g, ATP5MK/subunit k, ATP5MJ/subunit j, ATP5F1C/subunit gamma, ATP5F1D/subunit delta, ATP5F1E/subunit epsilon, ATP5PF/subunit F6, ATP5PB/subunit b, ATP5PD/subunit d, ATP5PO/subunit OSCP. ATP synthase complex consists of a soluble F(1) head domain (subunits alpha(3) and beta(3)) - the catalytic core - and a membrane F(0) domain - the membrane proton channel (subunits c, a, 8, e, f, g, k and j). These two domains are linked by a central stalk (subunits gamma, delta, and epsilon) rotating inside the F1 region and a stationary peripheral stalk (subunits F6, b, d, and OSCP).

The protein localises to the mitochondrion membrane. Subunit 8, of the mitochondrial membrane ATP synthase complex (F(1)F(0) ATP synthase or Complex V) that produces ATP from ADP in the presence of a proton gradient across the membrane which is generated by electron transport complexes of the respiratory chain. ATP synthase complex consist of a soluble F(1) head domain - the catalytic core - and a membrane F(1) domain - the membrane proton channel. These two domains are linked by a central stalk rotating inside the F(1) region and a stationary peripheral stalk. During catalysis, ATP synthesis in the catalytic domain of F(1) is coupled via a rotary mechanism of the central stalk subunits to proton translocation. In vivo, can only synthesize ATP although its ATP hydrolase activity can be activated artificially in vitro. Part of the complex F(0) domain. The sequence is that of ATP synthase F(0) complex subunit 8 from Musophaga violacea (Violet turaco).